A 375-amino-acid polypeptide reads, in one-letter code: 23S rRNA (uracil(747)-C(5))-methyltransferase RlmC (375 aa).

The [4Fe-4S] cluster site is built by Cys3, Cys11, Cys14, and Cys87. S-adenosyl-L-methionine is bound by residues Gln212, Phe241, Glu262, and Asn307. Residue Cys334 is the Nucleophile of the active site.

The protein belongs to the class I-like SAM-binding methyltransferase superfamily. RNA M5U methyltransferase family. RlmC subfamily.

The enzyme catalyses uridine(747) in 23S rRNA + S-adenosyl-L-methionine = 5-methyluridine(747) in 23S rRNA + S-adenosyl-L-homocysteine + H(+). Catalyzes the formation of 5-methyl-uridine at position 747 (m5U747) in 23S rRNA. In Shigella dysenteriae serotype 1 (strain Sd197), this protein is 23S rRNA (uracil(747)-C(5))-methyltransferase RlmC.